The following is a 395-amino-acid chain: Thyrotropin-releasing hormone receptor (395 aa).

Residues 1 to 30 lie on the Extracellular side of the membrane; the sequence is MENGTGDEQNHTGLLLSSQEFVTAEYQVVT. Asn3 and Asn10 each carry an N-linked (GlcNAc...) asparagine glycan. The helical transmembrane segment at 31–53 threads the bilayer; sequence ILLVLLICGLGIVGNIMVVLVVL. Topologically, residues 54 to 63 are cytoplasmic; it reads RTKHMRTPTN. The helical transmembrane segment at 64 to 85 threads the bilayer; sequence CYLVSLAVADLMVLVAAGLPNI. Over 86 to 101 the chain is Extracellular; the sequence is TESLYKSWVYGYVGCL. A disulfide bond links Cys100 and Cys181. The chain crosses the membrane as a helical span at residues 102–123; it reads CITYLQYLGINASSFSITAFTI. Residues 124–146 lie on the Cytoplasmic side of the membrane; that stretch reads ERYIAICHPIKAQFLCTFSRAKK. Residues 147–170 form a helical membrane-spanning segment; it reads IIIFVWSFASVYCMLWFFLLDLNI. Residues 171–195 are Extracellular-facing; it reads AVYKDTTVVSCGYKVSRSYYSPIYM. The helical transmembrane segment at 196-217 threads the bilayer; that stretch reads MDFGIFYVLPMVLATVLYGLIA. At 218–268 the chain is on the cytoplasmic side; sequence RILFLNPIPSDPKENSNTWKNDMAQQNKTVNSKMTNKSFNSTIASRRQVTK. The chain crosses the membrane as a helical span at residues 269–290; it reads MLAVVVVLFAFLWMPYRTLVVV. Residues 291–298 lie on the Extracellular side of the membrane; it reads NSFLSSPF. The helical transmembrane segment at 299 to 321 threads the bilayer; sequence QENWFLLFCRICIYLNSAINPVI. Topologically, residues 322–395 are cytoplasmic; sequence YNLMSQKFRA…IGDTCLSSEA (74 aa).

This sequence belongs to the G-protein coupled receptor 1 family.

It is found in the cell membrane. Receptor for thyrotropin-releasing hormone (TRH). Upon ligand binding, this G-protein-coupled receptor triggers activation of the phosphatidylinositol (IP3)-calcium-protein kinase C (PKC) pathway. This is Thyrotropin-releasing hormone receptor (TRHR) from Gallus gallus (Chicken).